Here is a 303-residue protein sequence, read N- to C-terminus: uncharacterized protein (303 aa).

This is an uncharacterized protein from Leptospira interrogans.